A 191-amino-acid chain; its full sequence is MSEKKNKKERLADEIEQEELNILDEAEEAVEEEATADTLTEEQAKILELENKLDEVENRYLRMQADFENVKKRHIADRDASQKYRSQSLAQDLLPALDSFEKALATTSDQEEVKQILKGMEMVYNQILIAFEKEGIEVIPAVGEQFDPNFHQAVMQDSDENAGSNEITAELQKGYKLKDRVIRPSMVKVNQ.

This sequence belongs to the GrpE family. Homodimer.

It localises to the cytoplasm. Participates actively in the response to hyperosmotic and heat shock by preventing the aggregation of stress-denatured proteins, in association with DnaK and GrpE. It is the nucleotide exchange factor for DnaK and may function as a thermosensor. Unfolded proteins bind initially to DnaJ; upon interaction with the DnaJ-bound protein, DnaK hydrolyzes its bound ATP, resulting in the formation of a stable complex. GrpE releases ADP from DnaK; ATP binding to DnaK triggers the release of the substrate protein, thus completing the reaction cycle. Several rounds of ATP-dependent interactions between DnaJ, DnaK and GrpE are required for fully efficient folding. In Listeria monocytogenes serotype 1/2a (strain 10403S), this protein is Protein GrpE.